A 632-amino-acid polypeptide reads, in one-letter code: MQYPKNYDVVVIGGGHAGTEAALAAARMGAQTLLLTHNIETLGQMSCNPAIGGIGKSHLVREIDALGGAMALATDKSGIQFRVLNSRKGAAVRATRAQADRILYKAAIRHTLENQPNLDIFQQAADDILVENGRATAVVTATGIIFNTQTVVLTSGTFLGGVIHIGLESSKGGRAGDQPSIKLADRLRELKLPVGRLKTGTPARIDARSVDFSVMTVQPGDTPLPVMSYMGDVSMHPEQVNCYITHTNARTHDIIRENLDRSPMFSGKIEGVGPRYCPSIEDKIHRFADKDSHQIFIEPEGLTTHELYPNGISTSLPFDVQLEFIHSMKGLENAHITRPGYAIEYDYFDPQNLKPTLETKSIDRLYFAGQINGTTGYEEAGVQGLLAGTNAALVTCENNEFDVWTPRRDEAYLGVLVDDLITHGTTEPYRMFTSRAEYRLLLREDNADQRLTETGRKLGLVDDVRWQAYEEKMEAIASETARLKDMWATPANALGKKVTEQTGEVLSKEATAFDLLKRPQIHFADIAAITDSQVDAQVGEQIEISVKYAGYIDRQQEDIDQMKRLENTALPIDFDYSVVSGLSNEIVQKLAQVRPSTLAQAGRISGVTPAAIQLLAMTVKKQKKVKAALNAS.

13-18 (GGGHAG) contacts FAD. An NAD(+)-binding site is contributed by 273 to 287 (GPRYCPSIEDKIHRF).

It belongs to the MnmG family. In terms of assembly, homodimer. Heterotetramer of two MnmE and two MnmG subunits. FAD serves as cofactor.

Its subcellular location is the cytoplasm. Its function is as follows. NAD-binding protein involved in the addition of a carboxymethylaminomethyl (cmnm) group at the wobble position (U34) of certain tRNAs, forming tRNA-cmnm(5)s(2)U34. The polypeptide is tRNA uridine 5-carboxymethylaminomethyl modification enzyme MnmG (Psychrobacter cryohalolentis (strain ATCC BAA-1226 / DSM 17306 / VKM B-2378 / K5)).